The sequence spans 247 residues: Cell division protein ZapD (247 aa).

This sequence belongs to the ZapD family. In terms of assembly, interacts with FtsZ.

The protein localises to the cytoplasm. In terms of biological role, cell division factor that enhances FtsZ-ring assembly. Directly interacts with FtsZ and promotes bundling of FtsZ protofilaments, with a reduction in FtsZ GTPase activity. The protein is Cell division protein ZapD of Shigella boydii serotype 18 (strain CDC 3083-94 / BS512).